We begin with the raw amino-acid sequence, 291 residues long: Syntaxin-1A homolog (291 aa).

The segment at 1–24 (MTKDRLSALKAAQSEDEQDDDMHM) is disordered. Residues 1-266 (MTKDRLSALK…QYQSKARRKK (266 aa)) lie on the Cytoplasmic side of the membrane. The stretch at 69–95 (NDQKTKEELDELMAVIKRAANKVRGKL) forms a coiled coil. Residues 193–255 (LADIEARHND…DRAVADTKKA (63 aa)) form the t-SNARE coiled-coil homology domain. The chain crosses the membrane as a helical; Anchor for type IV membrane protein span at residues 267 to 287 (ICILVTGVILITGLIIFILFY). The Extracellular portion of the chain corresponds to 288–291 (AKVL).

Belongs to the syntaxin family. Interacts (via N-terminus, in open or in closed conformation) with unc-18; the interaction is direct. Interaction in open conformation with unc-18 promotes synaptic vesicle docking and tethering. Interaction via N-terminus with unc-18 mediates the secretion of the neurotransmitter acetylcholine from cholinergic motor neurons. Interaction with unc-18 is reduced in the presence of unc-13. As to expression, expressed throughout the head ganglion, nerve ring, ventral cord, dorsal cord, intestine, vulva and spermatheca.

Its subcellular location is the cell membrane. The protein resides in the cell projection. It is found in the axon. It localises to the dendrite. The protein localises to the perikaryon. Its function is as follows. Plays a critical role in several secretory processes, including cuticle secretion and neurotransmitter release, and probably assists in neuronal membrane maturation or the final stages of neuronal differentiation. Plays a role in synaptic vesicle docking and tethering through its association with unc-18. Through binding to unc-18 mediates the release of the neurotransmitter acetylcholine from cholinergic motor neurons, and thereby promotes locomotory behaviors. Essential for embryonic viability and development. Has a role in dauer formation and adult life span. Required for locomotion. Probably by regulating neuronal transmission downstream of lin-3 and receptor lin-23 and phospholipase plc-3 and upstream of innexin unc-7 and egl-4/PKG in ALA neurons, involved in the decrease in pharyngeal pumping during the quiescent state that precedes each larval molt. The polypeptide is Syntaxin-1A homolog (Caenorhabditis elegans).